Consider the following 133-residue polypeptide: Small ribosomal subunit protein uS9 (133 aa).

This sequence belongs to the universal ribosomal protein uS9 family.

The chain is Small ribosomal subunit protein uS9 from Picrophilus torridus (strain ATCC 700027 / DSM 9790 / JCM 10055 / NBRC 100828 / KAW 2/3).